A 609-amino-acid chain; its full sequence is 2',5'-phosphodiesterase 12 (609 aa).

Residues 1 to 42 constitute a mitochondrion transit peptide; it reads MWRLPGARAALRVIRTAVEKLSRAEAGSQTAAGAMERAVVRC. Over residues 89 to 99 the composition is skewed to basic residues; the sequence is AAAAKKSRKSR. Disordered regions lie at residues 89–111 and 206–230; these read AAAA…CSGP and AEPE…ETDV. Composition is skewed to low complexity over residues 100 to 111 and 213 to 224; these read PNASGGAACSGP and PSSLSPSSPSSS. Serine 217 carries the post-translational modification Phosphoserine. Mg(2+)-binding residues include glutamate 351, aspartate 496, and asparagine 498. Catalysis depends on aspartate 496, which acts as the Proton donor/acceptor.

It belongs to the CCR4/nocturin family. Mg(2+) serves as cofactor. Ubiquitous.

Its subcellular location is the mitochondrion matrix. The catalysed reaction is Exonucleolytic cleavage of poly(A) to 5'-AMP.. Functionally, enzyme that cleaves 2',5'-phosphodiester bond linking adenosines of the 5'-triphosphorylated oligoadenylates, triphosphorylated oligoadenylates referred as 2-5A modulates the 2-5A system. Degrades triphosphorylated 2-5A to produce AMP and ATP. Also cleaves 3',5'-phosphodiester bond of oligoadenylates. Plays a role as a negative regulator of the 2-5A system that is one of the major pathways for antiviral and antitumor functions induced by interferons (IFNs). Suppression of this enzyme increases cellular 2-5A levels and decreases viral replication in cultured small-airway epithelial cells and Hela cells. The polypeptide is 2',5'-phosphodiesterase 12 (PDE12) (Homo sapiens (Human)).